A 72-amino-acid chain; its full sequence is Large ribosomal subunit protein bL28 (72 aa).

Belongs to the bacterial ribosomal protein bL28 family.

This chain is Large ribosomal subunit protein bL28, found in Chlorobium phaeobacteroides (strain BS1).